The sequence spans 468 residues: 6-phosphogluconate dehydrogenase, decarboxylating (468 aa).

Residues 10 to 15 (GMAVMG), 33 to 35 (NRS), 74 to 76 (VKA), and Asn102 each bind NADP(+). Substrate contacts are provided by residues Asn102 and 128 to 130 (SGG). The Proton acceptor role is filled by Lys183. Residue 186–187 (HN) participates in substrate binding. Catalysis depends on Glu190, which acts as the Proton donor. The substrate site is built by Tyr191, Lys260, Arg287, Arg445, and His451.

The protein belongs to the 6-phosphogluconate dehydrogenase family. Homodimer.

The catalysed reaction is 6-phospho-D-gluconate + NADP(+) = D-ribulose 5-phosphate + CO2 + NADPH. The protein operates within carbohydrate degradation; pentose phosphate pathway; D-ribulose 5-phosphate from D-glucose 6-phosphate (oxidative stage): step 3/3. Its function is as follows. Catalyzes the oxidative decarboxylation of 6-phosphogluconate to ribulose 5-phosphate and CO(2), with concomitant reduction of NADP to NADPH. This is 6-phosphogluconate dehydrogenase, decarboxylating (gnd) from Shigella flexneri.